The following is a 264-amino-acid chain: Tetraspanin-12 (264 aa).

The Cytoplasmic segment spans residues 1 to 13 (MLRLSNAAVITTN). A helical transmembrane segment spans residues 14–34 (AILALIGLAALSFSVYVYVQG). At 35 to 45 (PSQCQRFVQNP) the chain is on the extracellular side. The chain crosses the membrane as a helical span at residues 46-66 (LIVTAALLFFISSLGLIAALY). Residues 67–75 (GSHIIITLY) are Cytoplasmic-facing. Residues 76-96 (LFFLFLSILLLLVLSVFIFLV) form a helical membrane-spanning segment. Residues 97–228 (TNPTAGKALS…VLKGIRKRWR (132 aa)) lie on the Extracellular side of the membrane. N-linked (GlcNAc...) asparagine glycosylation occurs at Asn-180. The chain crosses the membrane as a helical span at residues 229 to 249 (ILIVVNLLLILLVVFLYSCGC). At 250–264 (CVRKNNRVPWKRRFF) the chain is on the cytoplasmic side.

It belongs to the tetraspanin (TM4SF) family.

It localises to the membrane. In terms of biological role, may be involved in the regulation of cell differentiation. This Arabidopsis thaliana (Mouse-ear cress) protein is Tetraspanin-12 (TET12).